The following is a 309-amino-acid chain: Probable ABC transporter permease protein YqgH (309 aa).

Helical transmembrane passes span 30 to 50, 88 to 108, 133 to 153, 165 to 185, 214 to 234, and 280 to 300; these read MIVT…TIFL, FIFG…PLGI, LVGI…VPFI, LLAG…SISA, LVPA…ARAF, and NTLW…ILLI. The 212-residue stretch at 89–300 folds into the ABC transmembrane type-1 domain; the sequence is IFGSFAVTIL…VMSFLFILLI (212 aa).

Belongs to the binding-protein-dependent transport system permease family. CysTW subfamily.

The protein resides in the cell membrane. In terms of biological role, part of the binding-protein-dependent transport system YqgGHIJK. Probably responsible for the translocation of the substrate across the membrane. In Bacillus subtilis (strain 168), this protein is Probable ABC transporter permease protein YqgH (yqgH).